Here is a 32-residue protein sequence, read N- to C-terminus: MTTSMLNAKLLPTAPSAAVVVVRVVVVVGNAP.

Functionally, this protein is involved in control of the biosynthesis of isoleucine, leucine, and valine. This is ilv operon leader peptide (ivbL) from Escherichia coli (strain K12).